The sequence spans 28 residues: Cytochrome c oxidase subunit 5B, mitochondrial (28 aa).

It belongs to the cytochrome c oxidase subunit 5B family. In terms of assembly, component of the cytochrome c oxidase (complex IV, CIV), a multisubunit enzyme composed of a catalytic core of 3 subunits and several supernumerary subunits. The complex exists as a monomer or a dimer and forms supercomplexes (SCs) in the inner mitochondrial membrane with ubiquinol-cytochrome c oxidoreductase (cytochrome b-c1 complex, complex III, CIII).

Its subcellular location is the mitochondrion inner membrane. It participates in energy metabolism; oxidative phosphorylation. Functionally, component of the cytochrome c oxidase, the last enzyme in the mitochondrial electron transport chain which drives oxidative phosphorylation. The respiratory chain contains 3 multisubunit complexes succinate dehydrogenase (complex II, CII), ubiquinol-cytochrome c oxidoreductase (cytochrome b-c1 complex, complex III, CIII) and cytochrome c oxidase (complex IV, CIV), that cooperate to transfer electrons derived from NADH and succinate to molecular oxygen, creating an electrochemical gradient over the inner membrane that drives transmembrane transport and the ATP synthase. Cytochrome c oxidase is the component of the respiratory chain that catalyzes the reduction of oxygen to water. Electrons originating from reduced cytochrome c in the intermembrane space (IMS) are transferred via the dinuclear copper A center (CU(A)) of subunit 2 and heme A of subunit 1 to the active site in subunit 1, a binuclear center (BNC) formed by heme A3 and copper B (CU(B)). The BNC reduces molecular oxygen to 2 water molecules using 4 electrons from cytochrome c in the IMS and 4 protons from the mitochondrial matrix. The polypeptide is Cytochrome c oxidase subunit 5B, mitochondrial (Solanum tuberosum (Potato)).